The sequence spans 313 residues: MSHSVIKVSLSAIDQMKMTYSGSLTASVPQGAVFQAKPPGCTITAYQSGKVLFQGKNAAAESARWGTAEPQEKKKTAKKPADPRYAPPADIAGMSVIGSDEVGTGDYFGPMTVVCAYVDKTMLPLMKELGVKDSKDLKDPQIIEIARNLIKTIPYSLLVLKNEKYNSMQEKGMSQGKMKALLHNQAITHLLRKLDGVKPEAILIDQFAEPGVYFNHLKGRDIVKERTYFSTKAEGIHLAVAAASIIARYSFLMEMDKLSRAAGMTLPKGAGPHVDEAAAKLILKKGASALRTFTKLHFANTQKAQRLADKKRS.

Positions 63–85 (ARWGTAEPQEKKKTAKKPADPRY) are disordered. Positions 70-82 (PQEKKKTAKKPAD) are enriched in basic and acidic residues. Residues 94–310 (MSVIGSDEVG…TQKAQRLADK (217 aa)) form the RNase H type-2 domain. Positions 100, 101, and 205 each coordinate a divalent metal cation.

Belongs to the RNase HII family. RnhC subfamily. As to quaternary structure, interacts with the RNA polymerase core. Requires Mn(2+) as cofactor. It depends on Mg(2+) as a cofactor.

The protein resides in the cytoplasm. The catalysed reaction is Endonucleolytic cleavage to 5'-phosphomonoester.. In terms of biological role, endonuclease that specifically degrades the RNA of RNA-DNA hybrids. The chain is Ribonuclease HIII (rnhC) from Bacillus subtilis (strain 168).